The sequence spans 415 residues: Multidrug resistance protein MdtA (415 aa).

The first 21 residues, 1–21, serve as a signal peptide directing secretion; sequence MKGSYKSRWVIVIVVVIAAIA. Polar residues predominate over residues 34-47; it reads SAAPGATKQAQQSP. 2 disordered regions span residues 34-60 and 392-415; these read SAAPGATKQAQQSPAGGRRGMRSGPLA and EAQSATTPEEKATSREYAKKGARS. A compositionally biased stretch (basic and acidic residues) spans 399-415; sequence PEEKATSREYAKKGARS.

This sequence belongs to the membrane fusion protein (MFP) (TC 8.A.1) family. Part of a tripartite efflux system composed of MdtA, MdtB and MdtC.

It localises to the cell inner membrane. Functionally, the MdtABC tripartite complex confers resistance against novobiocin and deoxycholate. The polypeptide is Multidrug resistance protein MdtA (Escherichia fergusonii (strain ATCC 35469 / DSM 13698 / CCUG 18766 / IAM 14443 / JCM 21226 / LMG 7866 / NBRC 102419 / NCTC 12128 / CDC 0568-73)).